The primary structure comprises 318 residues: Porphobilinogen deaminase (318 aa).

Position 241 is an S-(dipyrrolylmethanemethyl)cysteine (Cys-241).

This sequence belongs to the HMBS family. As to quaternary structure, monomer. It depends on dipyrromethane as a cofactor.

The enzyme catalyses 4 porphobilinogen + H2O = hydroxymethylbilane + 4 NH4(+). Its pathway is porphyrin-containing compound metabolism; protoporphyrin-IX biosynthesis; coproporphyrinogen-III from 5-aminolevulinate: step 2/4. Functionally, tetrapolymerization of the monopyrrole PBG into the hydroxymethylbilane pre-uroporphyrinogen in several discrete steps. This Geobacter sulfurreducens (strain ATCC 51573 / DSM 12127 / PCA) protein is Porphobilinogen deaminase.